Consider the following 159-residue polypeptide: Transcriptional repressor NrdR (159 aa).

A zinc finger lies at 3 to 34; sequence CPTCQNTDSRVLESRSADTGKSVRRRRECLNC. Residues 49 to 139 enclose the ATP-cone domain; sequence ISVLKKDGSR…VYRKFNGVKD (91 aa).

This sequence belongs to the NrdR family. The cofactor is Zn(2+).

In terms of biological role, negatively regulates transcription of bacterial ribonucleotide reductase nrd genes and operons by binding to NrdR-boxes. The chain is Transcriptional repressor NrdR from Prochlorococcus marinus (strain MIT 9515).